The sequence spans 165 residues: MTERIALFPGSFDPFTKGHLDTVERASRLFDRVIIAVMTNAAKKPLFDGPTKVALIETVIADLDNVSVVAQPKTLTANFAQAVGARYLIRGIRNANDFEYERDIAALNQTQDAQLETVLLLAKQEFSFISSSMVKEIAAFGGQVDQLVPPAVAVALQEKLKHGRD.

S11 provides a ligand contact to substrate. ATP contacts are provided by residues 11–12 and H19; that span reads SF. 3 residues coordinate substrate: K43, T76, and R90. Residues 91–93, E101, and 126–132 contribute to the ATP site; these read GIR and FSFISSS.

The protein belongs to the bacterial CoaD family. Homohexamer. Mg(2+) is required as a cofactor.

It localises to the cytoplasm. The catalysed reaction is (R)-4'-phosphopantetheine + ATP + H(+) = 3'-dephospho-CoA + diphosphate. Its pathway is cofactor biosynthesis; coenzyme A biosynthesis; CoA from (R)-pantothenate: step 4/5. Its function is as follows. Reversibly transfers an adenylyl group from ATP to 4'-phosphopantetheine, yielding dephospho-CoA (dPCoA) and pyrophosphate. The chain is Phosphopantetheine adenylyltransferase from Latilactobacillus sakei subsp. sakei (strain 23K) (Lactobacillus sakei subsp. sakei).